Consider the following 492-residue polypeptide: Probable glycine dehydrogenase (decarboxylating) subunit 2 (492 aa).

Position 274 is an N6-(pyridoxal phosphate)lysine (K274).

It belongs to the GcvP family. C-terminal subunit subfamily. The glycine cleavage system is composed of four proteins: P, T, L and H. In this organism, the P 'protein' is a heterodimer of two subunits. The cofactor is pyridoxal 5'-phosphate.

It catalyses the reaction N(6)-[(R)-lipoyl]-L-lysyl-[glycine-cleavage complex H protein] + glycine + H(+) = N(6)-[(R)-S(8)-aminomethyldihydrolipoyl]-L-lysyl-[glycine-cleavage complex H protein] + CO2. Functionally, the glycine cleavage system catalyzes the degradation of glycine. The P protein binds the alpha-amino group of glycine through its pyridoxal phosphate cofactor; CO(2) is released and the remaining methylamine moiety is then transferred to the lipoamide cofactor of the H protein. The protein is Probable glycine dehydrogenase (decarboxylating) subunit 2 of Staphylococcus saprophyticus subsp. saprophyticus (strain ATCC 15305 / DSM 20229 / NCIMB 8711 / NCTC 7292 / S-41).